Reading from the N-terminus, the 444-residue chain is RAC family serine/threonine-protein kinase homolog (444 aa).

Residues 5–100 (PIKHEGFLTK…WIEILINERE (96 aa)) form the PH domain. In terms of domain architecture, Protein kinase spans 120 to 374 (FELLNLVGKG…PNLIKRHPFF (255 aa)). ATP contacts are provided by residues 126–134 (VGKGSFGKV) and K149. Catalysis depends on D243, which acts as the Proton acceptor. T278 is modified (phosphothreonine). Residues 375–444 (RSIDWEQLFQ…TYVAESEHLR (70 aa)) form the AGC-kinase C-terminal domain.

Belongs to the protein kinase superfamily. AGC Ser/Thr protein kinase family. RAC subfamily.

It carries out the reaction L-seryl-[protein] + ATP = O-phospho-L-seryl-[protein] + ADP + H(+). It catalyses the reaction L-threonyl-[protein] + ATP = O-phospho-L-threonyl-[protein] + ADP + H(+). Predominantly involved during the aggregation to control cell polarity and chemotaxis. Phosphorylates talB, gefN, gefS, PI4P 5-kinase and gacQ. The polypeptide is RAC family serine/threonine-protein kinase homolog (pkbA) (Dictyostelium discoideum (Social amoeba)).